Here is a 221-residue protein sequence, read N- to C-terminus: U1 small nuclear ribonucleoprotein C (221 aa).

The segment at 4–36 (HYCDYCDVFLTHDSVSVRKAHNSGRNHLQNVRE) adopts a Matrin-type zinc-finger fold. The segment at 80 to 221 (GAGPLSGSSD…PHSRTGYGPR (142 aa)) is disordered. Positions 142-158 (YSRPPPQGGPYSRPPPD) are enriched in pro residues. Residues 178-190 (PLGYGAPLPGAYP) are compositionally biased toward low complexity. Pro residues predominate over residues 191–204 (SGPPPNMRGPPPPL).

It belongs to the U1 small nuclear ribonucleoprotein C family. In terms of assembly, U1 snRNP is composed of the 7 core Sm proteins B/B', D1, D2, D3, E, F and G that assemble in a heptameric protein ring on the Sm site of the small nuclear RNA to form the core snRNP, and at least 3 U1 snRNP-specific proteins U1-70K, U1-A and U1-C. U1-C interacts with U1 snRNA and the 5' splice-site region of the pre-mRNA.

The protein resides in the nucleus. In terms of biological role, component of the spliceosomal U1 snRNP, which is essential for recognition of the pre-mRNA 5' splice-site and the subsequent assembly of the spliceosome. U1-C is directly involved in initial 5' splice-site recognition for both constitutive and regulated alternative splicing. The interaction with the 5' splice-site seems to precede base-pairing between the pre-mRNA and the U1 snRNA. Stimulates commitment or early (E) complex formation by stabilizing the base pairing of the 5' end of the U1 snRNA and the 5' splice-site region. The protein is U1 small nuclear ribonucleoprotein C of Mycosarcoma maydis (Corn smut fungus).